A 346-amino-acid chain; its full sequence is Free fatty acid receptor 3 (346 aa).

Residues 1-19 (MDTGPDQSYFSGNHWFVFS) lie on the Extracellular side of the membrane. Residues 20–40 (VYLLTFLVGLPLNLLALVVFV) traverse the membrane as a helical segment. Over 41–47 (GKLQRRP) the chain is Cytoplasmic. The chain crosses the membrane as a helical span at residues 48–68 (VAVDVLLLNLTASDLLLLLFL). The Extracellular segment spans residues 69-88 (PFRMVEAANGMHWPLPFILC). A disulfide bond links cysteine 88 and cysteine 169. The helical transmembrane segment at 89–111 (PLSGFIFFTTIYLTALFLAAVSI) threads the bilayer. The Cytoplasmic segment spans residues 112-132 (ERFLSVAHPLWYKTRPRLGQA). A helical transmembrane segment spans residues 133 to 153 (GLVSVACWLLASAHCSVVYVI). The Extracellular portion of the chain corresponds to 154 to 178 (EFSGDISHSQGTNGTCYLEFRKDQL). An N-linked (GlcNAc...) asparagine glycan is attached at asparagine 166. Residues 179-199 (AILLPVRLEMAVVLFVVPLII) traverse the membrane as a helical segment. Residues 200–222 (TSYCYSRLVWILGRGGSHRRQRR) are Cytoplasmic-facing. Residues 223–243 (VAGLLAATLLNFLVCFGPYNV) traverse the membrane as a helical segment. The Extracellular portion of the chain corresponds to 244–258 (SHVVGYICGESPAWR). The chain crosses the membrane as a helical span at residues 259–279 (IYVTLLSTLNSCVDPFVYYFS). Residues 280–346 (SSGFQADFHE…TGGQVACAES (67 aa)) are Cytoplasmic-facing. The segment covering 307 to 330 (MELKEQKGGEEQRADRPAERKTSE) has biased composition (basic and acidic residues). Residues 307–346 (MELKEQKGGEEQRADRPAERKTSEHSQGCGTGGQVACAES) form a disordered region.

The protein belongs to the G-protein coupled receptor 1 family. As to expression, highest level in adipose tissue, and lower expression across all tissues tested. Expressed in sympathetic ganglia.

Its subcellular location is the cell membrane. G protein-coupled receptor that is activated by a major product of dietary fiber digestion, the short chain fatty acids (SCFAs), and that plays a role in the regulation of whole-body energy homeostasis and in intestinal immunity. In omnivorous mammals, the short chain fatty acids acetate, propionate and butyrate are produced primarily by the gut microbiome that metabolizes dietary fibers. SCFAs serve as a source of energy but also act as signaling molecules. That G protein-coupled receptor is probably coupled to the pertussis toxin-sensitive, G(i/o)-alpha family of G proteins. Its activation results in the formation of inositol 1,4,5-trisphosphate, the mobilization of intracellular calcium, the phosphorylation of the MAPK3/ERK1 and MAPK1/ERK2 kinases and the inhibition of intracellular cAMP accumulation. Activated by SCFAs and by beta-hydroxybutyrate, a ketone body produced by the liver upon starvation, it inhibits N-type calcium channels and modulates the activity of sympathetic neurons through a signaling cascade involving the beta and gamma subunits of its coupled G protein, phospholipase C and MAP kinases. Thereby, it may regulate energy expenditure through the control of the sympathetic nervous system that controls for instance heart rate. Upon activation by SCFAs accumulating in the intestine, it may also signal to the brain via neural circuits which in turn would regulate intestinal gluconeogenesis. May also control the production of hormones involved in whole-body energy homeostasis. May for instance, regulate blood pressure through renin secretion. May also regulate secretion of the PYY peptide by enteroendocrine cells and control gut motility, intestinal transit rate, and the harvesting of energy from SCFAs produced by gut microbiota. May also indirectly regulate the production of LEP/Leptin, a hormone acting on the CNS to inhibit food intake, in response to the presence of short-chain fatty acids in the intestine. Finally, may also play a role in glucose homeostasis. Besides its role in energy homeostasis, may play a role in intestinal immunity. May mediate the activation of the inflammatory and immune response by SCFAs in the gut, regulating the rapid production of chemokines and cytokines by intestinal epithelial cells. Among SCFAs, the fatty acids containing less than 6 carbons, the most potent activators are probably propionate, butyrate and pentanoate while acetate is a poor activator. The protein is Free fatty acid receptor 3 (FFAR3) of Homo sapiens (Human).